A 264-amino-acid chain; its full sequence is 3-methyl-2-oxobutanoate hydroxymethyltransferase (264 aa).

2 residues coordinate Mg(2+): Asp-44 and Asp-83. Residues 44–45, Asp-83, and Lys-111 contribute to the 3-methyl-2-oxobutanoate site; that span reads DS. Glu-113 is a Mg(2+) binding site. Glu-180 serves as the catalytic Proton acceptor.

It belongs to the PanB family. As to quaternary structure, homodecamer; pentamer of dimers. Requires Mg(2+) as cofactor.

It is found in the cytoplasm. It carries out the reaction 3-methyl-2-oxobutanoate + (6R)-5,10-methylene-5,6,7,8-tetrahydrofolate + H2O = 2-dehydropantoate + (6S)-5,6,7,8-tetrahydrofolate. Its pathway is cofactor biosynthesis; (R)-pantothenate biosynthesis; (R)-pantoate from 3-methyl-2-oxobutanoate: step 1/2. Functionally, catalyzes the reversible reaction in which hydroxymethyl group from 5,10-methylenetetrahydrofolate is transferred onto alpha-ketoisovalerate to form ketopantoate. In Marinobacter nauticus (strain ATCC 700491 / DSM 11845 / VT8) (Marinobacter aquaeolei), this protein is 3-methyl-2-oxobutanoate hydroxymethyltransferase.